A 257-amino-acid chain; its full sequence is Snake venom serine protease nikobin (257 aa).

Positions 1 to 18 (MVLIRVLANLLLLQLSYA) are cleaved as a signal peptide. Residues 19–24 (QKSSEL) constitute a propeptide that is removed on maturation. The Peptidase S1 domain maps to 25 to 248 (VIGGDECNIN…YSDWIQSIIA (224 aa)). Cystine bridges form between Cys-31–Cys-162, Cys-49–Cys-65, Cys-97–Cys-255, Cys-141–Cys-209, Cys-173–Cys-188, and Cys-199–Cys-224. Catalysis depends on charge relay system residues His-64 and Asp-109. 2 N-linked (GlcNAc...) asparagine glycosylation sites follow: Asn-120 and Asn-121. Catalysis depends on Ser-203, which acts as the Charge relay system. N-linked (GlcNAc...) asparagine glycosylation is present at Asn-250.

Belongs to the peptidase S1 family. Snake venom subfamily. In terms of assembly, monomer. As to expression, expressed by the venom gland.

It is found in the secreted. Snake venom serine protease that may act in the hemostasis system of the prey. The sequence is that of Snake venom serine protease nikobin (sp-VN) from Vipera nikolskii (Nikolsky's adder).